Consider the following 224-residue polypeptide: 7-cyano-7-deazaguanine synthase (224 aa).

12–22 (LSGGLDSSTVT) provides a ligand contact to ATP. Residues C193, C201, C204, and C207 each contribute to the Zn(2+) site.

It belongs to the QueC family. Zn(2+) serves as cofactor.

It catalyses the reaction 7-carboxy-7-deazaguanine + NH4(+) + ATP = 7-cyano-7-deazaguanine + ADP + phosphate + H2O + H(+). It functions in the pathway purine metabolism; 7-cyano-7-deazaguanine biosynthesis. Catalyzes the ATP-dependent conversion of 7-carboxy-7-deazaguanine (CDG) to 7-cyano-7-deazaguanine (preQ(0)). The protein is 7-cyano-7-deazaguanine synthase of Prochlorococcus marinus (strain MIT 9312).